Reading from the N-terminus, the 729-residue chain is Glycerophosphodiester phosphodiesterase GDPDL5 (729 aa).

Residues 1-22 form the signal peptide; that stretch reads MACPRVIFLILITFFILQTAFS. GP-PDE domains are found at residues 33 to 320 and 337 to 645; these read PAVI…YRAI and ITII…ARYR. N-linked (GlcNAc...) asparagine glycans are attached at residues Asn88, Asn162, Asn218, Asn227, Asn285, Asn302, Asn390, Asn401, and Asn507. Residues 709–729 form a helical membrane-spanning segment; it reads AIEVPFAFIAMAILVCFFISV.

The protein belongs to the glycerophosphoryl diester phosphodiesterase family. Expressed in stems, flowers and siliques.

It localises to the membrane. It catalyses the reaction a sn-glycero-3-phosphodiester + H2O = an alcohol + sn-glycerol 3-phosphate + H(+). The protein is Glycerophosphodiester phosphodiesterase GDPDL5 of Arabidopsis thaliana (Mouse-ear cress).